Consider the following 307-residue polypeptide: MLVYIAGSGAMGCRFGYQISKTNNDVILLDNWEDHINAIKENGLVVTGDVEETVKLPIMKPTEATQEADLIILFTKAMQLPQMLQDIKGIIGKETKVLCLLNGLGHEDVIRQYIPEHNILMGVTVWTAGLEGPGRAHLQGVGALNLQSMDPNNQDAGHQVADLLNKANLNATYDENVVPNIWRKACVNGTMNSTCALLDCTIGELFASEDGLKMVKEIIHEFVIVGQAEGVELNEEEITQYVMDTSVRAAHHYPSMHQDLVQNHRLTEIDFINGAVNTKGEKLGINTPYCRMITELVHAKEAVLNIQ.

NADP(+) is bound by residues 7–12 (GSGAMG), Asn102, and Ala128. Position 102 (Asn102) interacts with substrate. Lys184 (proton donor) is an active-site residue. Substrate contacts are provided by Asn188, Asn192, and Ser255. Glu268 lines the NADP(+) pocket.

The protein belongs to the ketopantoate reductase family.

The protein resides in the cytoplasm. It carries out the reaction (R)-pantoate + NADP(+) = 2-dehydropantoate + NADPH + H(+). The protein operates within cofactor biosynthesis; (R)-pantothenate biosynthesis; (R)-pantoate from 3-methyl-2-oxobutanoate: step 2/2. Functionally, catalyzes the NADPH-dependent reduction of ketopantoate into pantoic acid. This is 2-dehydropantoate 2-reductase (apbA) from Streptococcus pyogenes serotype M6 (strain ATCC BAA-946 / MGAS10394).